The sequence spans 126 residues: Glycine cleavage system H protein (126 aa).

Residues 22-104 form the Lipoyl-binding domain; it reads TVTIGVTDFA…YGEGWMIKIK (83 aa). Lys63 is modified (N6-lipoyllysine).

This sequence belongs to the GcvH family. In terms of assembly, the glycine cleavage system is composed of four proteins: P, T, L and H. The cofactor is (R)-lipoate.

Its function is as follows. The glycine cleavage system catalyzes the degradation of glycine. The H protein shuttles the methylamine group of glycine from the P protein to the T protein. The protein is Glycine cleavage system H protein of Christiangramia forsetii (strain DSM 17595 / CGMCC 1.15422 / KT0803) (Gramella forsetii).